A 506-amino-acid chain; its full sequence is Maturase K (506 aa).

The protein belongs to the intron maturase 2 family. MatK subfamily.

It is found in the plastid. The protein resides in the chloroplast. In terms of biological role, usually encoded in the trnK tRNA gene intron. Probably assists in splicing its own and other chloroplast group II introns. The protein is Maturase K of Prunus persica (Peach).